Consider the following 302-residue polypeptide: Sulfate adenylyltransferase subunit 2 (302 aa).

The protein belongs to the PAPS reductase family. CysD subfamily. As to quaternary structure, heterodimer composed of CysD, the smaller subunit, and CysN.

The enzyme catalyses sulfate + ATP + H(+) = adenosine 5'-phosphosulfate + diphosphate. Its pathway is sulfur metabolism; hydrogen sulfide biosynthesis; sulfite from sulfate: step 1/3. Functionally, with CysN forms the ATP sulfurylase (ATPS) that catalyzes the adenylation of sulfate producing adenosine 5'-phosphosulfate (APS) and diphosphate, the first enzymatic step in sulfur assimilation pathway. APS synthesis involves the formation of a high-energy phosphoric-sulfuric acid anhydride bond driven by GTP hydrolysis by CysN coupled to ATP hydrolysis by CysD. This Yersinia pestis bv. Antiqua (strain Nepal516) protein is Sulfate adenylyltransferase subunit 2.